We begin with the raw amino-acid sequence, 326 residues long: D-allose transport system permease protein AlsC (326 aa).

The Cytoplasmic portion of the chain corresponds to M1 to N18. The chain crosses the membrane as a helical span at residues F19–F39. The Periplasmic segment spans residues G40–E70. A helical membrane pass occupies residues F71–G91. Residues M92–G101 are Cytoplasmic-facing. Residues V102 to I122 form a helical membrane-spanning segment. Topologically, residues N123–G124 are periplasmic. Residues C125–F145 traverse the membrane as a helical segment. The Cytoplasmic portion of the chain corresponds to R146–T149. A helical membrane pass occupies residues L150–A170. The Periplasmic portion of the chain corresponds to A171–S172. Residues V173 to L193 form a helical membrane-spanning segment. Over T194–K221 the chain is Cytoplasmic. Residues F222 to S242 traverse the membrane as a helical segment. Topologically, residues T243–L252 are periplasmic. The chain crosses the membrane as a helical span at residues A253–F273. Residues G274–R278 are Cytoplasmic-facing. The next 2 helical transmembrane spans lie at I279–L299 and Q300–L320. Over D321–K326 the chain is Cytoplasmic.

The protein belongs to the binding-protein-dependent transport system permease family. AraH/RbsC subfamily.

It is found in the cell inner membrane. In terms of biological role, part of the binding-protein-dependent transport system AlsBAC for D-allose; probably responsible for the translocation of the substrate across the membrane. In Escherichia coli (strain K12), this protein is D-allose transport system permease protein AlsC (alsC).